We begin with the raw amino-acid sequence, 380 residues long: Transcription factor SOX-7 (380 aa).

The tract at residues 24 to 43 (SDGLSPPAVPRPSGDKSSES) is disordered. A DNA-binding region (HMG box) is located at residues 45-113 (IRRPMNAFMV…QHMQDYPNYK (69 aa)). The interval 139-167 (SRDQNTLPEKNGIGRGEKEDRGEYSPGAT) is disordered. The Sox C-terminal domain occupies 260–380 (VSMMSSVSGC…ATYYNSYSVS (121 aa)). The required for beta-catenin-binding stretch occupies residues 323–328 (EFDQYL).

Interacts with CTNNB1/beta-catenin; this interaction may lead to the proteasomal degradation of active CTNNB1 and thus inhibition of Wnt/beta-catenin-stimulated transcription. In terms of tissue distribution, predominantly expressed in ovary, lung and heart. In the ovary, restricted to oocytes (at protein level). Present both in mesenchymal and epithelial cells in some adult tissues, including ear.

It is found in the nucleus. The protein localises to the cytoplasm. Functionally, binds to and activates the CDH5 promoter, hence plays a role in the transcriptional regulation of genes expressed in the hemogenic endothelium and blocks further differentiation into blood precursors. May be required for the survival of both hematopoietic and endothelial precursors during specification. May play a role in skeletal myogenesis and up-regulate the expression of muscle markers, such as PAX3/PAX7 and Meox1. Competes with GATA4 for binding and activation of the FGF3 promoter. Represses Wnt/beta-catenin-stimulated transcription. Probably acts by targeting CTNNB1 to proteasomal degradation. Binds the DNA sequence 5'-AACAAT-3'. This chain is Transcription factor SOX-7 (Sox7), found in Mus musculus (Mouse).